The chain runs to 156 residues: V-type sodium ATPase subunit K (156 aa).

Transmembrane regions (helical) follow at residues 11 to 31 (GMVF…IGSA), 60 to 80 (LLPG…FINL), 89 to 109 (GLNF…SGIA), and 132 to 152 (IIFA…SFLL).

This sequence belongs to the V-ATPase proteolipid subunit family. In terms of processing, the N-terminus is blocked.

The protein resides in the cell membrane. In terms of biological role, involved in ATP-driven sodium extrusion. This is V-type sodium ATPase subunit K (ntpK) from Enterococcus hirae (strain ATCC 9790 / DSM 20160 / JCM 8729 / LMG 6399 / NBRC 3181 / NCIMB 6459 / NCDO 1258 / NCTC 12367 / WDCM 00089 / R).